Reading from the N-terminus, the 96-residue chain is Cytochrome oxidase assembly factor 4 (96 aa).

Residues K36–E77 enclose the CHCH domain. 2 short sequence motifs (cx9C motif) span residues C39–C49 and C59–C69. Intrachain disulfides connect C39/C69 and C49/C59.

This sequence belongs to the COA4 family.

It is found in the mitochondrion inner membrane. It localises to the mitochondrion intermembrane space. Involved in cytochrome c oxidase assembly or stability. The sequence is that of Cytochrome oxidase assembly factor 4 (COA4) from Saccharomyces cerevisiae (strain ATCC 204508 / S288c) (Baker's yeast).